Here is a 111-residue protein sequence, read N- to C-terminus: KREKSFDCTECGKSFKRKSKLKTHFLCHTGEKPFVCVHCGKGFRDNYKLSLHLRIHTGENLSVCPDCGKSYTDKNKLIVHMRIHTGEKFMCSECGKGFSDFYNLKSHLQIH.

C2H2-type zinc fingers lie at residues 6–28 (FDCT…FLCH), 34–56 (FVCV…LRIH), 62–84 (SVCP…MRIH), and 89–111 (FMCS…LQIH).

This sequence belongs to the krueppel C2H2-type zinc-finger protein family.

It is found in the nucleus. Its function is as follows. May be involved in transcriptional regulation. In Xenopus laevis (African clawed frog), this protein is Gastrula zinc finger protein XlCGF32.1.